Here is a 328-residue protein sequence, read N- to C-terminus: Tetraacyldisaccharide 4'-kinase (328 aa).

55 to 62 contacts ATP; it reads TAGGNGKT.

It belongs to the LpxK family.

It carries out the reaction a lipid A disaccharide + ATP = a lipid IVA + ADP + H(+). It functions in the pathway glycolipid biosynthesis; lipid IV(A) biosynthesis; lipid IV(A) from (3R)-3-hydroxytetradecanoyl-[acyl-carrier-protein] and UDP-N-acetyl-alpha-D-glucosamine: step 6/6. Its function is as follows. Transfers the gamma-phosphate of ATP to the 4'-position of a tetraacyldisaccharide 1-phosphate intermediate (termed DS-1-P) to form tetraacyldisaccharide 1,4'-bis-phosphate (lipid IVA). The sequence is that of Tetraacyldisaccharide 4'-kinase from Escherichia coli O6:K15:H31 (strain 536 / UPEC).